The following is a 123-amino-acid chain: Venom peptide MmKTx1 (123 aa).

Residues 1–21 form the signal peptide; sequence MSIKISAIALFMLSFTVFVNG.

The protein belongs to the scorpion La1-like peptide family. Post-translationally, contains 4 disulfide bonds. In terms of tissue distribution, expressed by the venom gland.

It localises to the secreted. This is Venom peptide MmKTx1 from Olivierus martensii (Manchurian scorpion).